Reading from the N-terminus, the 195-residue chain is Probable nicotinate-nucleotide adenylyltransferase (195 aa).

Belongs to the NadD family.

It carries out the reaction nicotinate beta-D-ribonucleotide + ATP + H(+) = deamido-NAD(+) + diphosphate. The protein operates within cofactor biosynthesis; NAD(+) biosynthesis; deamido-NAD(+) from nicotinate D-ribonucleotide: step 1/1. Catalyzes the reversible adenylation of nicotinate mononucleotide (NaMN) to nicotinic acid adenine dinucleotide (NaAD). The sequence is that of Probable nicotinate-nucleotide adenylyltransferase from Chlorobaculum tepidum (strain ATCC 49652 / DSM 12025 / NBRC 103806 / TLS) (Chlorobium tepidum).